The following is a 345-amino-acid chain: IGF-like family receptor 1 (345 aa).

An N-terminal signal peptide occupies residues 1 to 20; sequence MGPSWLLWTVAVAVLLLTRA. Residues 21 to 163 lie on the Extracellular side of the membrane; it reads ASMEASSFCG…SSRPGFVSAS (143 aa). Asparagine 87 carries N-linked (GlcNAc...) asparagine glycosylation. Residues 106 to 149 form a disordered region; that stretch reads VESPGRTHKQCRKKPVPPKDVCPLKPEDAGASSSPGRWSLGQTT. Positions 111–121 are enriched in basic residues; it reads RTHKQCRKKPV. Residues 136–149 are compositionally biased toward polar residues; sequence ASSSPGRWSLGQTT. Residues 164-184 traverse the membrane as a helical segment; it reads VLPLAVLPLLLVLLLILAVVL. The Cytoplasmic portion of the chain corresponds to 185–345; sequence LSLFKRKVRS…DALQVLSKLG (161 aa).

Ubiquitously expressed with higher expression in lymph node. Highly expressed in T-cells and monocytes.

Its subcellular location is the cell membrane. Probable cell membrane receptor for the IGF-like family protein IGFL. This Mus musculus (Mouse) protein is IGF-like family receptor 1 (Igflr1).